The chain runs to 592 residues: Guanylate-binding protein 1 (592 aa).

Positions 1–311 (MASEIHMTGP…NAISSGDLPC (311 aa)) are GTPase domain (Globular). The GB1/RHD3-type G domain maps to 35–278 (TQPMVVVAIV…FCSYIFSNSK (244 aa)). GTP contacts are provided by residues 45–52 (GLYRTGKS), 67–69 (LGS), and 97–101 (DTEGL). Phosphoserine; by PIM1 is present on S156. Residues K207, K209, K210, K382, K562, K567, K573, and K587 each participate in a (Microbial infection) Glycyl lysine isopeptide (Lys-Gly) (interchain with G-Cter in ubiquitin) cross-link. C589 carries the cysteine methyl ester modification. The S-farnesyl cysteine moiety is linked to residue C589. T590 bears the Phosphothreonine; by PIM1 mark. Positions 590–592 (TIS) are cleaved as a propeptide — removed in mature form.

The protein belongs to the TRAFAC class dynamin-like GTPase superfamily. GB1/RHD3 GTPase family. GB1 subfamily. As to quaternary structure, homodimer; homodimerization occurs upon GTP-binding and is required for the second hydrolysis step from GDP to GMP. Undergoes conformational changes and oligomerization upon GTP-binding and hydrolysis. Heterodimer with other family members, including GBP2, GBP3, GBP4 and GBP5. Dimerization regulates subcellular location to membranous structures. Interacts with SQSTM1. Interacts (when phosphorylated) with 14-3-3 protein sigma (SFN); leading to GBP1 retention in the cytosol and inactivation. Post-translationally, isoprenylation is required for proper subcellular location. In terms of processing, phosphorylated at Ser-156 by PIM1 in absence of infection, inhibits GBP1: phosphorylation promotes interaction with 14-3-3 protein sigma (SFN), leading to GBP1 retention in the cytosol. Dephosphorylated in response to infection, liberating GBP1. (Microbial infection) Ubiquitinated by S.flexneri IpaH9.8, leading to its degradation by the proteasome, thereby preventing its ability to promote host defense against bacterial infection.

The protein localises to the cytoplasmic vesicle membrane. It is found in the golgi apparatus membrane. Its subcellular location is the cell membrane. It localises to the cytoplasm. The protein resides in the cytosol. The protein localises to the secreted. The catalysed reaction is GTP + H2O = GDP + phosphate + H(+). It carries out the reaction GDP + H2O = GMP + phosphate + H(+). Interferon (IFN)-inducible GTPase that plays important roles in innate immunity against a diverse range of bacterial, viral and protozoan pathogens. Hydrolyzes GTP to GMP in two consecutive cleavage reactions: GTP is first hydrolyzed to GDP and then to GMP in a processive manner. Following infection, recruited to the pathogen-containing vacuoles or vacuole-escaped bacteria and promotes both inflammasome assembly and autophagy. Acts as a positive regulator of inflammasome assembly by facilitating the detection of inflammasome ligands from pathogens. Involved in the lysis of pathogen-containing vacuoles, releasing pathogens into the cytosol. Following pathogen release in the cytosol, forms a protein coat in a GTPase-dependent manner that encapsulates pathogens and promotes the detection of ligands by pattern recognition receptors. Plays a key role in inflammasome assembly in response to infection by Gram-negative bacteria: following pathogen release in the cytosol, forms a protein coat that encapsulates Gram-negative bacteria and directly binds to lipopolysaccharide (LPS), disrupting the O-antigen barrier and unmasking lipid A that is that detected by the non-canonical inflammasome effector CASP4/CASP11. Also promotes recruitment of proteins that mediate bacterial cytolysis, leading to release double-stranded DNA (dsDNA) that activates the AIM2 inflammasome. Involved in autophagy by regulating bacteriolytic peptide generation via its interaction with ubiquitin-binding protein SQSTM1, which delivers monoubiquitinated proteins to autolysosomes for the generation of bacteriolytic peptides. Confers protection to several pathogens, including the bacterial pathogens L.monocytogenes and M.bovis BCG as well as the protozoan pathogen T.gondii. Exhibits antiviral activity against influenza virus. This is Guanylate-binding protein 1 from Homo sapiens (Human).